The chain runs to 142 residues: Large ribosomal subunit protein uL13 (142 aa).

The protein belongs to the universal ribosomal protein uL13 family. As to quaternary structure, part of the 50S ribosomal subunit.

In terms of biological role, this protein is one of the early assembly proteins of the 50S ribosomal subunit, although it is not seen to bind rRNA by itself. It is important during the early stages of 50S assembly. In Halorhodospira halophila (strain DSM 244 / SL1) (Ectothiorhodospira halophila (strain DSM 244 / SL1)), this protein is Large ribosomal subunit protein uL13.